We begin with the raw amino-acid sequence, 598 residues long: Beta-hexosaminidase A (598 aa).

The first 11 residues, 1–11 (MSFITSAHATA), serve as a signal peptide directing secretion. Residue D305 is part of the active site.

The protein belongs to the glycosyl hydrolase 3 family.

It catalyses the reaction Hydrolysis of terminal non-reducing N-acetyl-D-hexosamine residues in N-acetyl-beta-D-hexosaminides.. Its function is as follows. Most active towards p-nitrophenyl-N-acetyl-beta-D-glucosaminide(PNP-beta-GlcNAc) and diacetylchitobiose. This chain is Beta-hexosaminidase A (cht60), found in Pseudoalteromonas piscicida.